The chain runs to 399 residues: 3-sulfinopropanoyl-CoA desulfinase (399 aa).

FAD-binding positions include 121–124 (ICIS), serine 130, and 153–156 (YWIT). Residue 244-245 (YN) coordinates substrate. FAD-binding positions include arginine 273, glutamine 340, serine 344, 367–371 (GGTAQ), and glutamine 388.

It belongs to the acyl-CoA dehydrogenase family. As to quaternary structure, homotrimer or homotetramer. It depends on FAD as a cofactor.

The enzyme catalyses 3-sulfinopropanoyl-CoA + H2O = propanoyl-CoA + sulfite + H(+). Catalyzes the conversion 3-sulfinopropanoyl-CoA (3SP-CoA) to propanoyl-CoA by abstraction of sulfite. Does not show dehydrogenase activity. This is 3-sulfinopropanoyl-CoA desulfinase from Variovorax paradoxus.